We begin with the raw amino-acid sequence, 206 residues long: Small ribosomal subunit protein uS4 (206 aa).

In terms of domain architecture, S4 RNA-binding spans 96 to 156 (GRLDNVVYRM…EKSKKQARIK (61 aa)).

This sequence belongs to the universal ribosomal protein uS4 family. In terms of assembly, part of the 30S ribosomal subunit. Contacts protein S5. The interaction surface between S4 and S5 is involved in control of translational fidelity.

Functionally, one of the primary rRNA binding proteins, it binds directly to 16S rRNA where it nucleates assembly of the body of the 30S subunit. In terms of biological role, with S5 and S12 plays an important role in translational accuracy. The chain is Small ribosomal subunit protein uS4 from Actinobacillus succinogenes (strain ATCC 55618 / DSM 22257 / CCUG 43843 / 130Z).